We begin with the raw amino-acid sequence, 98 residues long: NADH-ubiquinone oxidoreductase chain 4L (98 aa).

The next 3 membrane-spanning stretches (helical) occupy residues Met1–Met21, Ser29–Met49, and Ile61–Ile81.

This sequence belongs to the complex I subunit 4L family. In terms of assembly, core subunit of respiratory chain NADH dehydrogenase (Complex I) which is composed of 45 different subunits.

The protein localises to the mitochondrion inner membrane. The catalysed reaction is a ubiquinone + NADH + 5 H(+)(in) = a ubiquinol + NAD(+) + 4 H(+)(out). Core subunit of the mitochondrial membrane respiratory chain NADH dehydrogenase (Complex I) which catalyzes electron transfer from NADH through the respiratory chain, using ubiquinone as an electron acceptor. Part of the enzyme membrane arm which is embedded in the lipid bilayer and involved in proton translocation. This Procyon lotor (Raccoon) protein is NADH-ubiquinone oxidoreductase chain 4L (MT-ND4L).